A 434-amino-acid polypeptide reads, in one-letter code: Protein maelstrom homolog (434 aa).

Positions arginine 4–glutamate 73 form a DNA-binding region, HMG box. A disordered region spans residues serine 357 to asparagine 385.

The protein belongs to the maelstrom family. In terms of assembly, interacts with SMARCB1, SIN3B and DDX4. Interacts with piRNA-associated proteins TDRD1, PIWIL1 and PIWIL2. Interacts with TEX19. As to expression, testis-specific. Expressed in various cancer cell lines, probably due to demethylation of its promoter.

The protein resides in the cytoplasm. Its subcellular location is the nucleus. Plays a central role during spermatogenesis by repressing transposable elements and preventing their mobilization, which is essential for the germline integrity. Acts via the piRNA metabolic process, which mediates the repression of transposable elements during meiosis by forming complexes composed of piRNAs and Piwi proteins and governs the methylation and subsequent repression of transposons. Its association with piP-bodies suggests a participation in the secondary piRNAs metabolic process. Required for the localization of germ-cell factors to the meiotic nuage. In Homo sapiens (Human), this protein is Protein maelstrom homolog (MAEL).